Reading from the N-terminus, the 376-residue chain is CCA-adding enzyme (376 aa).

Gly23 and Arg26 together coordinate ATP. CTP-binding residues include Gly23 and Arg26. Mg(2+)-binding residues include Glu36 and Asp38. ATP contacts are provided by Arg106, Arg152, and Arg155. CTP-binding residues include Arg106, Arg152, and Arg155.

The protein belongs to the tRNA nucleotidyltransferase/poly(A) polymerase family. Bacterial CCA-adding enzyme type 2 subfamily. Requires Mg(2+) as cofactor.

It carries out the reaction a tRNA precursor + 2 CTP + ATP = a tRNA with a 3' CCA end + 3 diphosphate. The enzyme catalyses a tRNA with a 3' CCA end + 2 CTP + ATP = a tRNA with a 3' CCACCA end + 3 diphosphate. Functionally, catalyzes the addition and repair of the essential 3'-terminal CCA sequence in tRNAs without using a nucleic acid template. Adds these three nucleotides in the order of C, C, and A to the tRNA nucleotide-73, using CTP and ATP as substrates and producing inorganic pyrophosphate. tRNA 3'-terminal CCA addition is required both for tRNA processing and repair. Also involved in tRNA surveillance by mediating tandem CCA addition to generate a CCACCA at the 3' terminus of unstable tRNAs. While stable tRNAs receive only 3'-terminal CCA, unstable tRNAs are marked with CCACCA and rapidly degraded. This chain is CCA-adding enzyme, found in Coxiella burnetii (strain RSA 331 / Henzerling II).